We begin with the raw amino-acid sequence, 307 residues long: E3 ubiquitin-protein ligase PHF7 (307 aa).

The C2HC pre-PHD-type zinc-finger motif lies at 30 to 68 (SPVCLLCLQEPGDPEKLGEFLQKDNLCVHYFCLILSSRL). Cysteine 33, cysteine 36, histidine 58, and cysteine 61 together coordinate Zn(2+). The required for interaction and ubiquitination of the nucleosome core particle stretch occupies residues 67-92 (RLPQKGQPNRGLHGFMPEDIKREAVR). A PHD-type zinc finger spans residues 96–145 (KICFVCKKKGAAIRCQNDQCVQNFHLPCGQERGCLSQFFGEYKSYCRKHR). The Zn(2+) site is built by cysteine 98, cysteine 101, cysteine 110, cysteine 115, histidine 120, cysteine 123, cysteine 141, histidine 144, cysteine 160, cysteine 163, cysteine 179, cysteine 180, histidine 186, cysteine 189, cysteine 204, cysteine 207, cysteine 248, cysteine 253, cysteine 273, cysteine 276, histidine 282, cysteine 285, cysteine 297, and cysteine 300. The interval 150 to 307 (IHQGSLGEES…NECLPASTTS (158 aa)) is required for interaction with ubiquitinated UBE2D2. The RING-type; degenerate zinc-finger motif lies at 160-208 (CVLCCENLSRTSVENIQSPCCSQAIYHRKCIQKYAHTSAKHFFKCPQCN). Residues 244-301 (RYRHCDAPICLYEQGRDSFEDEGRWRLILCATCGSHGTHRDCSSLRPNSKKWECNECL) form a required for association with and ubiquitination of H3 region.

Interacts with MEF2C; the interaction promotes MEF2C binding to its transcription targets. Interacts with GATA4; the interaction promotes GATA4 binding to its transcription targets. Interacts with UBE2D2; the interaction inhibits cleavage of PHF7 and promotes association of the complex with the nucleosome core particle. As to expression, expressed in Leydig cells and in developing spermatids (at protein level). Highly expressed in Sertoli cells in testis.

It is found in the nucleus. The enzyme catalyses S-ubiquitinyl-[E2 ubiquitin-conjugating enzyme]-L-cysteine + [acceptor protein]-L-lysine = [E2 ubiquitin-conjugating enzyme]-L-cysteine + N(6)-ubiquitinyl-[acceptor protein]-L-lysine.. The protein operates within protein modification; protein ubiquitination. E3 ubiquitin-protein ligase which ubiquitinates histone H3 at 'Lys-14'. Required for male fertility, via inhibition of SPOP-mediated BRDT degradation when in the presence of acetylated histone H4 in early condensing spermatids. Stabilization of BRDT allows it to facilitate histone removal in early condensing spermatids and promote the progression of histone-to-protamine exchange. Promotes the expression of steroidogenesis proteins in the testes, and as a result plays a role in maintaining testosterone levels and repressing osteoclastogenesis. Promotes transcription of cardiac enhancer genes by facilitating binding of cardiac transcription factors such as MEF2C and GATA4 to target gene promoters. Ubiquitinates histone H4. Ubiquitinates histone H2A and H3 as part of the nucleosome core particle. The sequence is that of E3 ubiquitin-protein ligase PHF7 from Mus musculus (Mouse).